The chain runs to 264 residues: MSPSHRPVVITGNWKMYKTVKEACTFAKALLPVVEVSPIQVWIAVPFTAIYPVKQEIRNSRLVIGAQNMNDASEGAFTGEIAGKMVKEAGASFVLLGHSERRHLYKEDNAFINRKVKKALEIGLTPVLCVGETFEERKSGETQQIIRTQIQECLAGLTAEDLKTLIIAYEPVWAIGNGQNAKPEGAQEIHQFCRKIIKEIFSEELAEQIVIQYGGSVNPSNAISLLKQPDIDGLLIGGASLSLETFVEIVNDGGSIFNLKAKLL.

13-15 serves as a coordination point for substrate; that stretch reads NWK. His98 acts as the Electrophile in catalysis. Residue Glu170 is the Proton acceptor of the active site. Residues Gly176, Ser216, and 237–238 contribute to the substrate site; that span reads GG.

The protein belongs to the triosephosphate isomerase family. As to quaternary structure, homodimer.

It localises to the cytoplasm. It catalyses the reaction D-glyceraldehyde 3-phosphate = dihydroxyacetone phosphate. Its pathway is carbohydrate biosynthesis; gluconeogenesis. The protein operates within carbohydrate degradation; glycolysis; D-glyceraldehyde 3-phosphate from glycerone phosphate: step 1/1. In terms of biological role, involved in the gluconeogenesis. Catalyzes stereospecifically the conversion of dihydroxyacetone phosphate (DHAP) to D-glyceraldehyde-3-phosphate (G3P). The chain is Triosephosphate isomerase from Protochlamydia amoebophila (strain UWE25).